Consider the following 397-residue polypeptide: L-aspartate--L-methionine ligase (397 aa).

Residues 131–347 enclose the ATP-grasp domain; it reads VALNNKARIP…FFNTILKYVK (217 aa). ADP-binding residues include lysine 136, valine 171, lysine 173, glycine 183, valine 186, isoleucine 188, glutamate 215, glutamine 216, isoleucine 218, asparagine 223, and threonine 246. Aspartate 288 serves as a coordination point for Mg(2+). Positions 290 and 300 each coordinate ADP. Aspartate 301 is a binding site for Mg(2+). Arginine 305 acts as the Critical for catalysis in catalysis.

As to quaternary structure, primarily a monomer in solution. Minor homodimer formation. Mg(2+) serves as cofactor.

It catalyses the reaction L-aspartate + L-methionine + ATP = L-aspartyl-L-methionine + ADP + phosphate + H(+). The protein operates within amino-acid metabolism. Functionally, L-amino acid ligase, which preferentially catalyzes the formation of L-aspartyl-L-methionine dipeptide from L-aspartate and L-methionine in the presence of ATP. Less active with L-asparagine and L-methionine as substrates. Less active with L-aspartate and either L-phenylalanine, L-valine, L-leucine or L-isoleucine as substrates. Decreased activity when L-methionine is substituted with seleno-DL-methionine, L-homocysteine, L-methionine sulfoxide, L-methionine sulfoximine and o-acetyl-L-serine. Decreased activity with acetylation of L-methionine amino group. Decreased activity by modification of L-methionine carboxylate to L-methionine methyl ester. No activity when L-methionine is substituted with L-homoserine. No activity with formylation of L-methionine amino group. No activity by modification of L-methionine carboxylate to L-methionine-glycine carboxylate. No activity when L-aspartate substrate is replaced by analogs such as L-homoserine, DL-aspartate beta-methyl ester, L-glutamate or o-acetyl-L-serine. No activity when L-aspartate amino and alpha-carboxylate groups are modified to L-malate, glycine-L-aspartate, L-aspartate-glycine or N-carbamoyl-DL-aspartate. No activity with L-methionine or L-aspartate as sole substrates. No activity in presence of other nucleoside triphosphates including GTP, CTP, UTP, TTP or ITP. Involved in sulfur amino acid metabolism. The chain is L-aspartate--L-methionine ligase from Staphylococcus aureus (strain NCTC 8325 / PS 47).